A 299-amino-acid chain; its full sequence is ATP phosphoribosyltransferase (299 aa).

The protein belongs to the ATP phosphoribosyltransferase family. Long subfamily. The cofactor is Mg(2+).

The protein resides in the cytoplasm. It catalyses the reaction 1-(5-phospho-beta-D-ribosyl)-ATP + diphosphate = 5-phospho-alpha-D-ribose 1-diphosphate + ATP. Its pathway is amino-acid biosynthesis; L-histidine biosynthesis; L-histidine from 5-phospho-alpha-D-ribose 1-diphosphate: step 1/9. Its activity is regulated as follows. Feedback inhibited by histidine. In terms of biological role, catalyzes the condensation of ATP and 5-phosphoribose 1-diphosphate to form N'-(5'-phosphoribosyl)-ATP (PR-ATP). Has a crucial role in the pathway because the rate of histidine biosynthesis seems to be controlled primarily by regulation of HisG enzymatic activity. This chain is ATP phosphoribosyltransferase, found in Campylobacter jejuni subsp. jejuni serotype O:2 (strain ATCC 700819 / NCTC 11168).